Consider the following 178-residue polypeptide: Protein Vhl (178 aa).

This sequence belongs to the VHL family. Part of a complex with Cul2, Roc1a/Rbx1 and the elongin BC complex. Interacts with sima/Hif1a. Interacts with itself. Interacts with mgr and betaTub56D/tubulin beta-1 chain. Interacts with tubulin alpha-beta heterodimers by itself or in complex with mgr. Interacts with microtubules (MTs).

The protein operates within protein modification; protein ubiquitination. Functionally, involved in development of tracheal vasculature. Probably involved in halting cell migration at the end of vascular tube outgrowth. Possesses E3 ubiquitin ligase activity when in complex with Elongin BC complex, Cul2 and Rox1a/Rbx1, and can target sima/Hif1a for ubiquitination. May play a critical role in promoting microtubule stabilization when tubulins are correctly folded by the prefoldin complex. If tubulin is incorrectly folded, may promote its degradation. The chain is Protein Vhl from Drosophila melanogaster (Fruit fly).